Reading from the N-terminus, the 434-residue chain is Cytochrome b-c1 complex subunit 2, mitochondrial (434 aa).

The N-terminal 31 residues, 1–31, are a transit peptide targeting the mitochondrion; the sequence is MYSLNRLPRSAAFKSSANLLRRNASTTSAGG.

Belongs to the peptidase M16 family. UQCRC2/QCR2 subfamily. As to quaternary structure, component of the ubiquinol-cytochrome c oxidoreductase (cytochrome b-c1 complex, complex III, CIII), a multisubunit enzyme composed of 10 subunits. The complex is composed of 3 respiratory subunits cytochrome b (COB), cytochrome c1 (CYT1) and Rieske protein (RIP1), 2 core protein subunits COR1 and QCR2, and 5 low-molecular weight protein subunits QCR6, QCR7, QCR8, QCR9 and QCR10. The complex exists as an obligatory dimer and forms supercomplexes (SCs) in the inner mitochondrial membrane with a monomer or a dimer of cytochrome c oxidase (complex IV, CIV), resulting in 2 different assemblies (supercomplexes III(2)IV and III(2)IV(2)). Interacts with MRJ1.

The protein resides in the mitochondrion inner membrane. In terms of biological role, component of the ubiquinol-cytochrome c oxidoreductase, a multisubunit transmembrane complex that is part of the mitochondrial electron transport chain which drives oxidative phosphorylation. The respiratory chain contains 3 multisubunit complexes succinate dehydrogenase (complex II, CII), ubiquinol-cytochrome c oxidoreductase (cytochrome b-c1 complex, complex III, CIII) and cytochrome c oxidase (complex IV, CIV), that cooperate to transfer electrons derived from NADH and succinate to molecular oxygen, creating an electrochemical gradient over the inner membrane that drives transmembrane transport and the ATP synthase. The cytochrome b-c1 complex catalyzes electron transfer from ubiquinol to cytochrome c, linking this redox reaction to translocation of protons across the mitochondrial inner membrane, with protons being carried across the membrane as hydrogens on the quinol. In the process called Q cycle, 2 protons are consumed from the matrix, 4 protons are released into the intermembrane space and 2 electrons are passed to cytochrome c. The polypeptide is Cytochrome b-c1 complex subunit 2, mitochondrial (Cryptococcus neoformans var. grubii serotype A (strain H99 / ATCC 208821 / CBS 10515 / FGSC 9487) (Filobasidiella neoformans var. grubii)).